The chain runs to 214 residues: Somatotropin-A (214 aa).

An N-terminal signal peptide occupies residues Met1 to Ala25. 2 disulfide bridges follow: Cys77–Cys187 and Cys204–Cys212.

It belongs to the somatotropin/prolactin family.

Its subcellular location is the secreted. Its function is as follows. Growth hormone plays an important role in growth control. This chain is Somatotropin-A (gh-a), found in Xenopus laevis (African clawed frog).